We begin with the raw amino-acid sequence, 630 residues long: Chaperone protein DnaK (630 aa).

Position 197 is a phosphothreonine; by autocatalysis (Thr197). Over residues 604-618 the composition is skewed to polar residues; that stretch reads KNNESVKNNESVKNN. Positions 604-630 are disordered; sequence KNNESVKNNESVKNNESVKDVDFEEIK. Residues 619–630 are compositionally biased toward basic and acidic residues; the sequence is ESVKDVDFEEIK.

This sequence belongs to the heat shock protein 70 family.

In terms of biological role, acts as a chaperone. This is Chaperone protein DnaK from Karelsulcia muelleri (strain GWSS) (Sulcia muelleri).